The chain runs to 176 residues: ATP synthase subunit delta (176 aa).

Belongs to the ATPase delta chain family. As to quaternary structure, F-type ATPases have 2 components, F(1) - the catalytic core - and F(0) - the membrane proton channel. F(1) has five subunits: alpha(3), beta(3), gamma(1), delta(1), epsilon(1). F(0) has three main subunits: a(1), b(2) and c(10-14). The alpha and beta chains form an alternating ring which encloses part of the gamma chain. F(1) is attached to F(0) by a central stalk formed by the gamma and epsilon chains, while a peripheral stalk is formed by the delta and b chains.

The protein resides in the cell inner membrane. Functionally, f(1)F(0) ATP synthase produces ATP from ADP in the presence of a proton or sodium gradient. F-type ATPases consist of two structural domains, F(1) containing the extramembraneous catalytic core and F(0) containing the membrane proton channel, linked together by a central stalk and a peripheral stalk. During catalysis, ATP synthesis in the catalytic domain of F(1) is coupled via a rotary mechanism of the central stalk subunits to proton translocation. In terms of biological role, this protein is part of the stalk that links CF(0) to CF(1). It either transmits conformational changes from CF(0) to CF(1) or is implicated in proton conduction. The protein is ATP synthase subunit delta of Campylobacter hominis (strain ATCC BAA-381 / DSM 21671 / CCUG 45161 / LMG 19568 / NCTC 13146 / CH001A).